Here is a 50-residue protein sequence, read N- to C-terminus: Large ribosomal subunit protein bL33B (50 aa).

The protein belongs to the bacterial ribosomal protein bL33 family.

This chain is Large ribosomal subunit protein bL33B, found in Mycoplasmopsis agalactiae (strain NCTC 10123 / CIP 59.7 / PG2) (Mycoplasma agalactiae).